The sequence spans 286 residues: MATFSYFQNYPHSLLDPLLFPTPHSSINLTSFIDQNHLYPLPNISTVEDISFLEYNVDKTENSGSEKLANTTKTATTGSSSCDQLSHGPSAITNTGKTRGRKARNSNNSKEGVEGRKSKKQKRGSKEEPPTDYIHVRARRGQATDSHSLAERVRREKISERMRTLQNLVPGCDKVTGKALMLDEIINYVQTLQTQVEFLSMKLTSISPVVYDFGSDLDGLILQSEMGSPEVGTSFTNAMPTTTPIFPSLLDNSVVPTHAQVQEEGEERENFVDRSGFNNNNFCSFP.

A compositionally biased stretch (polar residues) spans 63–84; that stretch reads SGSEKLANTTKTATTGSSSCDQ. The disordered stretch occupies residues 63–149; that stretch reads SGSEKLANTT…RGQATDSHSL (87 aa). The bHLH domain maps to 142-192; sequence QATDSHSLAERVRREKISERMRTLQNLVPGCDKVTGKALMLDEIINYVQTL.

As to quaternary structure, homodimer.

The protein resides in the nucleus. The polypeptide is Transcription factor bHLH137 (BHLH137) (Arabidopsis thaliana (Mouse-ear cress)).